Here is a 332-residue protein sequence, read N- to C-terminus: Iron-utilization periplasmic protein (332 aa).

An N-terminal signal peptide occupies residues 1 to 23 (MQFKHFKLATLAAALAFSANSFA). Fe cation is bound by residues His-32, Glu-80, Tyr-218, and Tyr-219.

Belongs to the bacterial solute-binding protein 1 family. As to quaternary structure, the complex is composed of two ATP-binding proteins (FbpC), two transmembrane proteins (FbpB) and a solute-binding protein (FbpA).

The protein localises to the periplasm. In terms of biological role, part of the ABC transporter complex FbpABC (TC 3.A.1.10.1) involved in Fe(3+) ions import. This protein specifically binds Fe(3+) and is involved in its transmembrane transport. This Haemophilus influenzae (strain ATCC 51907 / DSM 11121 / KW20 / Rd) protein is Iron-utilization periplasmic protein (fbpA).